Here is a 498-residue protein sequence, read N- to C-terminus: DNA primase (498 aa).

A CHC2-type zinc finger spans residues 35–59 (CPFHPDDTPSFYVSPSKQIFKCFGC). One can recognise a Toprim domain in the interval 243-324 (GFAILVEGYF…EVYPVYLPEG (82 aa)). Residues Glu249, Asp293, and Asp295 each coordinate Mg(2+).

This sequence belongs to the DnaG primase family. Monomer. Interacts with DnaB. The cofactor is Zn(2+). Requires Mg(2+) as cofactor.

The catalysed reaction is ssDNA + n NTP = ssDNA/pppN(pN)n-1 hybrid + (n-1) diphosphate.. Its function is as follows. RNA polymerase that catalyzes the synthesis of short RNA molecules used as primers for DNA polymerase during DNA replication. This Aquifex aeolicus (strain VF5) protein is DNA primase.